Consider the following 21-residue polypeptide: Pseudogermin (21 aa).

It belongs to the germin family. In terms of assembly, homotetramer.

It localises to the secreted. It is found in the extracellular space. The protein localises to the apoplast. Its subcellular location is the cell wall. Its function is as follows. May subsume the role of germin at the low water potentials during embryogenesis. The polypeptide is Pseudogermin (Triticum aestivum (Wheat)).